The primary structure comprises 373 residues: Flagellar P-ring protein 1 (373 aa).

A signal peptide spans 1 to 24 (MRGISRLYWSLVLICFAFAPIVEA).

Belongs to the FlgI family. As to quaternary structure, the basal body constitutes a major portion of the flagellar organelle and consists of four rings (L,P,S, and M) mounted on a central rod.

The protein resides in the periplasm. The protein localises to the bacterial flagellum basal body. Its function is as follows. Assembles around the rod to form the L-ring and probably protects the motor/basal body from shearing forces during rotation. This chain is Flagellar P-ring protein 1, found in Hahella chejuensis (strain KCTC 2396).